Reading from the N-terminus, the 239-residue chain is tRNA (guanine-N(7)-)-methyltransferase (239 aa).

S-adenosyl-L-methionine contacts are provided by Glu69, Glu94, Asp121, and Asp144. The active site involves Asp144. Lys148 is a binding site for substrate. Positions 150–155 (RHNKRR) are interaction with RNA. Substrate-binding positions include Asp180 and 217 to 220 (TKFE).

It belongs to the class I-like SAM-binding methyltransferase superfamily. TrmB family. Monomer.

The enzyme catalyses guanosine(46) in tRNA + S-adenosyl-L-methionine = N(7)-methylguanosine(46) in tRNA + S-adenosyl-L-homocysteine. It participates in tRNA modification; N(7)-methylguanine-tRNA biosynthesis. In terms of biological role, catalyzes the formation of N(7)-methylguanine at position 46 (m7G46) in tRNA. This is tRNA (guanine-N(7)-)-methyltransferase from Shigella flexneri serotype 5b (strain 8401).